A 316-amino-acid polypeptide reads, in one-letter code: 4-diphosphocytidyl-2-C-methyl-D-erythritol kinase (316 aa).

Lysine 14 is a catalytic residue. Proline 96–serine 106 lines the ATP pocket. Aspartate 138 is a catalytic residue.

The protein belongs to the GHMP kinase family. IspE subfamily.

It carries out the reaction 4-CDP-2-C-methyl-D-erythritol + ATP = 4-CDP-2-C-methyl-D-erythritol 2-phosphate + ADP + H(+). Its pathway is isoprenoid biosynthesis; isopentenyl diphosphate biosynthesis via DXP pathway; isopentenyl diphosphate from 1-deoxy-D-xylulose 5-phosphate: step 3/6. Catalyzes the phosphorylation of the position 2 hydroxy group of 4-diphosphocytidyl-2C-methyl-D-erythritol. This Solibacter usitatus (strain Ellin6076) protein is 4-diphosphocytidyl-2-C-methyl-D-erythritol kinase.